The primary structure comprises 288 residues: Protease HtpX (288 aa).

2 consecutive transmembrane segments (helical) span residues 5–25 (IALF…VMSL) and 34–54 (SGLL…SLLL). His-140 serves as a coordination point for Zn(2+). The active site involves Glu-141. His-144 provides a ligand contact to Zn(2+). Transmembrane regions (helical) follow at residues 155 to 175 (LLQG…GGII) and 190 to 210 (FAYF…ATMI). Glu-219 contacts Zn(2+).

It belongs to the peptidase M48B family. Zn(2+) is required as a cofactor.

It is found in the cell inner membrane. This chain is Protease HtpX, found in Stenotrophomonas maltophilia (strain R551-3).